Reading from the N-terminus, the 198-residue chain is Methyl-coenzyme M reductase I operon protein C (198 aa).

MCR is composed of three subunits: alpha, beta, and gamma. The function of proteins C and D is not known.

The polypeptide is Methyl-coenzyme M reductase I operon protein C (mcrC) (Methanothermobacter marburgensis (strain ATCC BAA-927 / DSM 2133 / JCM 14651 / NBRC 100331 / OCM 82 / Marburg) (Methanobacterium thermoautotrophicum)).